The following is a 189-amino-acid chain: Adenine phosphoribosyltransferase (189 aa).

It belongs to the purine/pyrimidine phosphoribosyltransferase family. Homodimer.

The protein localises to the cytoplasm. It catalyses the reaction AMP + diphosphate = 5-phospho-alpha-D-ribose 1-diphosphate + adenine. It functions in the pathway purine metabolism; AMP biosynthesis via salvage pathway; AMP from adenine: step 1/1. Its function is as follows. Catalyzes a salvage reaction resulting in the formation of AMP, that is energically less costly than de novo synthesis. The polypeptide is Adenine phosphoribosyltransferase (Frankia alni (strain DSM 45986 / CECT 9034 / ACN14a)).